Consider the following 185-residue polypeptide: Large ribosomal subunit protein bL25 (185 aa).

It belongs to the bacterial ribosomal protein bL25 family. CTC subfamily. In terms of assembly, part of the 50S ribosomal subunit; part of the 5S rRNA/L5/L18/L25 subcomplex. Contacts the 5S rRNA. Binds to the 5S rRNA independently of L5 and L18.

Its function is as follows. This is one of the proteins that binds to the 5S RNA in the ribosome where it forms part of the central protuberance. In Chlamydia trachomatis serovar L2 (strain ATCC VR-902B / DSM 19102 / 434/Bu), this protein is Large ribosomal subunit protein bL25.